Reading from the N-terminus, the 36-residue chain is Peptide POLARIS (36 aa).

Belongs to the POLARIS peptide family. As to expression, mostly expressed in the embryonic root from the heart stage and in the seedling primary and lateral root tips, especially in the columella initials and lateral root cap. Also detectable in aerial parts of the seedling, sepals and leaves, principally in vascular tissues of the lamina and petiole.

Its function is as follows. Required for correct root growth and vascular development, probably by modulating both cell division rate in meristems and cell elongation in roots. Negative regulator of the ethylene signaling pathway that modulates microtubule cytoskeleton dynamics and auxin transport and homeostasis, and possibly cytokinin signaling, thus influencing root growth and lateral root development. The protein is Peptide POLARIS (PLS) of Arabidopsis thaliana (Mouse-ear cress).